The primary structure comprises 203 residues: Snake venom metalloproteinase adamalysin-2 (203 aa).

One can recognise a Peptidase M12B domain in the interval 7–203; the sequence is RYIELVVVAD…YKPQCILNKP (197 aa). Glu-10 and Asp-94 together coordinate Ca(2+). 2 disulfide bridges follow: Cys-118–Cys-198 and Cys-158–Cys-165. Residue His-143 coordinates Zn(2+). Residue Glu-144 is part of the active site. Residues His-147 and His-153 each coordinate Zn(2+). Residues Cys-198 and Asn-201 each coordinate Ca(2+).

It belongs to the venom metalloproteinase (M12B) family. P-I subfamily. Monomer. It depends on Zn(2+) as a cofactor. Expressed by the venom gland.

It localises to the secreted. The enzyme catalyses Cleavage of 1-Phe-|-Val-2, 5-His-|-Leu-6, 14-Ala-|-Leu-15, 15-Leu-|-Tyr-16, and 16-Tyr-|-Leu-17 of insulin B chain.. Has no significant hemorrhagic activity, but inactivates serpins by limited proteolysis of their reactive-site loops. The chain is Snake venom metalloproteinase adamalysin-2 from Crotalus adamanteus (Eastern diamondback rattlesnake).